A 752-amino-acid chain; its full sequence is MNINPYFLFIDVPIQAAISTTFPYTGVPPYSHGTGTGYTIDTVIRTHEYSNKGKQYISDVTGCVMVDPTNGPLPEDNEPSAYAQLDCVLEALDRMDEEHPGLFQAGSQNAMEALMVTTVDKLTQGRQTFDWTVCRNQPAATALNTTITSFRLNDLNGADKGGLVPFCQDIIDSLDKPEMIFFTVKNIKKKLPAKNRKGFLIKRIPMKVKDRITRVEYIKRALSLNTMTKDAERGKLKRRAIATAGIQIRGFVLVVENLAKNICENLEQSGLPVGGNEKKAKLSNAVAKMLSNCPPGGISMTVTGDNTKWNECLNPRIFLAMTERITRDSPIWFRDFCSIAPVLFSNKIARLGKGFMITSKTKRLKAQIPCPDLFNIPLERYNEETRAKLKKLKPFFNEEGTASLSPGMMMGMFNMLSTVLGVAALGIKNIGNKEYLWDGLQSSDDFALFVNAKDEETCMEGINDFYRTCKLLGINMSKKKSYCNETGMFEFTSMFYRDGFVSNFAMELPSFGVAGVNESADMAIGMTIIKNNMINNGMGPATAQTAIQLFIADYRYTYKCHRGDSKVEGKRMKIIKELWENTKGRDGLLVADGGPNLYNLRNLHIPEIILKYNIMDPEYKGRLLHPQNPFVGHLSIEGIKEADITPAHGPIKKMDYDAVSGTHSWRTKRNRSILNTDQRNMILEEQCYAKCCNLFEACFNSASYRKPVGQHSMLEAMAHRLRMDARLDYESGRMSKEDFEKAMAHLGEIGYM.

2 consecutive short sequence motifs (nuclear localization signal) follow at residues 187–195 (IKKKLPAKN) and 203–216 (RIPM…TRVE). Residues 249-256 (RGFVLVVE) form a promoter-binding site region. Residues 286–482 (VAKMLSNCPP…GINMSKKKSY (197 aa)) enclose the RdRp catalytic domain.

This sequence belongs to the influenza viruses polymerase PB1 family. As to quaternary structure, influenza RNA polymerase is composed of three subunits: PB1, PB2 and PA. Interacts (via N-terminus) with PA (via C-terminus). Interacts (via C-terminus) with PB2 (via N-terminus); this interaction is essential for transcription initiation. Post-translationally, phosphorylated by host PRKCA.

It localises to the host nucleus. It is found in the host cytoplasm. It catalyses the reaction RNA(n) + a ribonucleoside 5'-triphosphate = RNA(n+1) + diphosphate. Functionally, RNA-dependent RNA polymerase which is responsible for replication and transcription of virus RNA segments. The transcription of viral mRNAs occurs by a unique mechanism called cap-snatching. 5' methylated caps of cellular mRNAs are cleaved after 10-13 nucleotides by PA. In turn, these short capped RNAs are used as primers by PB1 for transcription of viral mRNAs. During virus replication, PB1 initiates RNA synthesis and copy vRNA into complementary RNA (cRNA) which in turn serves as a template for the production of more vRNAs. The protein is RNA-directed RNA polymerase catalytic subunit of Homo sapiens (Human).